Consider the following 360-residue polypeptide: Mitogen-activated protein kinase 14 (360 aa).

Serine 2 carries the N-acetylserine modification. Residue serine 2 is modified to Phosphoserine. Threonine 16 bears the Phosphothreonine mark. The region spanning tyrosine 24–phenylalanine 308 is the Protein kinase domain. ATP contacts are provided by residues valine 30–valine 38 and lysine 53. The residue at position 53 (lysine 53) is an N6-acetyllysine. Aspartate 150 functions as the Proton acceptor in the catalytic mechanism. Lysine 152 is modified (N6-acetyllysine). A Phosphothreonine; by MAP2K3, MAP2K4, MAP2K6 and autocatalysis modification is found at threonine 180. Residues threonine 180–tyrosine 182 carry the TXY motif. Residue tyrosine 182 is modified to Phosphotyrosine; by MAP2K3, MAP2K4, MAP2K6 and autocatalysis. Residue threonine 263 is modified to Phosphothreonine. Tyrosine 323 carries the phosphotyrosine; by ZAP70 modification.

This sequence belongs to the protein kinase superfamily. CMGC Ser/Thr protein kinase family. MAP kinase subfamily. Component of a signaling complex containing at least AKAP13, PKN1, MAPK14, ZAK and MAP2K3. Within this complex, AKAP13 interacts directly with PKN1, which in turn recruits MAPK14, MAP2K3 and ZAK. Binds to a kinase interaction motif within the protein tyrosine phosphatase, PTPRR. This interaction retains MAPK14 in the cytoplasm and prevents nuclear accumulation. Interacts with SPAG9 and GADD45A. Interacts with CDC25B, CDC25C, DUSP1, DUSP10, DUSP16, NP60, SUPT20H and TAB1. Interacts with casein kinase II subunits CSNK2A1 and CSNK2B. Interacts with PPM1D. Interacts with CDK5RAP3; recruits PPM1D to MAPK14 and may regulate its dephosphorylation. Interacts with DUSP2; this interaction does not lead to catalytic activation of DUSP2 and dephosphrylation of MAPK14. Mg(2+) is required as a cofactor. In terms of processing, dually phosphorylated on Thr-180 and Tyr-182 by the MAP2Ks MAP2K3/MKK3, MAP2K4/MKK4 and MAP2K6/MKK6 in response to inflammatory citokines, environmental stress or growth factors, which activates the enzyme. Dual phosphorylation can also be mediated by TAB1-mediated autophosphorylation. TCR engagement in T-cells also leads to Tyr-323 phosphorylation by ZAP70. Dephosphorylated and inactivated by DUPS1, DUSP10 and DUSP16. PPM1D also mediates dephosphorylation and inactivation of MAPK14. Post-translationally, acetylated at Lys-53 and Lys-152 by KAT2B and EP300. Acetylation at Lys-53 increases the affinity for ATP and enhances kinase activity. Lys-53 and Lys-152 are deacetylated by HDAC3. Ubiquitinated. Ubiquitination leads to degradation by the proteasome pathway.

Its subcellular location is the cytoplasm. The protein localises to the nucleus. It catalyses the reaction L-seryl-[protein] + ATP = O-phospho-L-seryl-[protein] + ADP + H(+). The catalysed reaction is L-threonyl-[protein] + ATP = O-phospho-L-threonyl-[protein] + ADP + H(+). With respect to regulation, activated by cell stresses such as DNA damage, heat shock, osmotic shock, anisomycin and sodium arsenite, as well as pro-inflammatory stimuli such as bacterial lipopolysaccharide (LPS) and interleukin-1. Activation occurs through dual phosphorylation of Thr-180 and Tyr-182 by either of two dual specificity kinases, MAP2K3/MKK3 or MAP2K6/MKK6, and potentially also MAP2K4/MKK4, as well as by TAB1-mediated autophosphorylation. MAPK14 phosphorylated on both Thr-180 and Tyr-182 is 10-20-fold more active than MAPK14 phosphorylated only on Thr-180, whereas MAPK14 phosphorylated on Tyr-182 alone is inactive. whereas Thr-180 is necessary for catalysis, Tyr-182 may be required for auto-activation and substrate recognition. Phosphorylated at Tyr-323 by ZAP70 in an alternative activation pathway in response to TCR signaling in T-cells. This alternative pathway is inhibited by GADD45A. Inhibited by dual specificity phosphatases, such as DUSP1, DUSP10, and DUSP16. Specifically inhibited by the binding of pyridinyl-imidazole compounds, which are cytokine-suppressive anti-inflammatory drugs (CSAID). SB203580 is an inhibitor of MAPK14. Its function is as follows. Serine/threonine kinase which acts as an essential component of the MAP kinase signal transduction pathway. MAPK14 is one of the four p38 MAPKs which play an important role in the cascades of cellular responses evoked by extracellular stimuli such as pro-inflammatory cytokines or physical stress leading to direct activation of transcription factors. Accordingly, p38 MAPKs phosphorylate a broad range of proteins and it has been estimated that they may have approximately 200 to 300 substrates each. Some of the targets are downstream kinases which are activated through phosphorylation and further phosphorylate additional targets. RPS6KA5/MSK1 and RPS6KA4/MSK2 can directly phosphorylate and activate transcription factors such as CREB1, ATF1, the NF-kappa-B isoform RELA/NFKB3, STAT1 and STAT3, but can also phosphorylate histone H3 and the nucleosomal protein HMGN1. RPS6KA5/MSK1 and RPS6KA4/MSK2 play important roles in the rapid induction of immediate-early genes in response to stress or mitogenic stimuli, either by inducing chromatin remodeling or by recruiting the transcription machinery. On the other hand, two other kinase targets, MAPKAPK2/MK2 and MAPKAPK3/MK3, participate in the control of gene expression mostly at the post-transcriptional level, by phosphorylating ZFP36 (tristetraprolin) and ELAVL1, and by regulating EEF2K, which is important for the elongation of mRNA during translation. MKNK1/MNK1 and MKNK2/MNK2, two other kinases activated by p38 MAPKs, regulate protein synthesis by phosphorylating the initiation factor EIF4E2. MAPK14 also interacts with casein kinase II, leading to its activation through autophosphorylation and further phosphorylation of TP53/p53. In the cytoplasm, the p38 MAPK pathway is an important regulator of protein turnover. For example, CFLAR is an inhibitor of TNF-induced apoptosis whose proteasome-mediated degradation is regulated by p38 MAPK phosphorylation. In a similar way, MAPK14 phosphorylates the ubiquitin ligase SIAH2, regulating its activity towards EGLN3. MAPK14 may also inhibit the lysosomal degradation pathway of autophagy by interfering with the intracellular trafficking of the transmembrane protein ATG9. Another function of MAPK14 is to regulate the endocytosis of membrane receptors by different mechanisms that impinge on the small GTPase RAB5A. In addition, clathrin-mediated EGFR internalization induced by inflammatory cytokines and UV irradiation depends on MAPK14-mediated phosphorylation of EGFR itself as well as of RAB5A effectors. Ectodomain shedding of transmembrane proteins is regulated by p38 MAPKs as well. In response to inflammatory stimuli, p38 MAPKs phosphorylate the membrane-associated metalloprotease ADAM17. Such phosphorylation is required for ADAM17-mediated ectodomain shedding of TGF-alpha family ligands, which results in the activation of EGFR signaling and cell proliferation. Another p38 MAPK substrate is FGFR1. FGFR1 can be translocated from the extracellular space into the cytosol and nucleus of target cells, and regulates processes such as rRNA synthesis and cell growth. FGFR1 translocation requires p38 MAPK activation. In the nucleus, many transcription factors are phosphorylated and activated by p38 MAPKs in response to different stimuli. Classical examples include ATF1, ATF2, ATF6, ELK1, PTPRH, DDIT3, TP53/p53 and MEF2C and MEF2A. The p38 MAPKs are emerging as important modulators of gene expression by regulating chromatin modifiers and remodelers. The promoters of several genes involved in the inflammatory response, such as IL6, IL8 and IL12B, display a p38 MAPK-dependent enrichment of histone H3 phosphorylation on 'Ser-10' (H3S10ph) in LPS-stimulated myeloid cells. This phosphorylation enhances the accessibility of the cryptic NF-kappa-B-binding sites marking promoters for increased NF-kappa-B recruitment. Phosphorylates CDC25B and CDC25C which is required for binding to 14-3-3 proteins and leads to initiation of a G2 delay after ultraviolet radiation. Phosphorylates TIAR following DNA damage, releasing TIAR from GADD45A mRNA and preventing mRNA degradation. The p38 MAPKs may also have kinase-independent roles, which are thought to be due to the binding to targets in the absence of phosphorylation. Protein O-Glc-N-acylation catalyzed by the OGT is regulated by MAPK14, and, although OGT does not seem to be phosphorylated by MAPK14, their interaction increases upon MAPK14 activation induced by glucose deprivation. This interaction may regulate OGT activity by recruiting it to specific targets such as neurofilament H, stimulating its O-Glc-N-acylation. Required in mid-fetal development for the growth of embryo-derived blood vessels in the labyrinth layer of the placenta. Also plays an essential role in developmental and stress-induced erythropoiesis, through regulation of EPO gene expression. Phosphorylates S100A9 at 'Thr-113'. This Canis lupus familiaris (Dog) protein is Mitogen-activated protein kinase 14.